Reading from the N-terminus, the 430-residue chain is Histidine--tRNA ligase (430 aa).

It belongs to the class-II aminoacyl-tRNA synthetase family. Homodimer.

The protein resides in the cytoplasm. It catalyses the reaction tRNA(His) + L-histidine + ATP = L-histidyl-tRNA(His) + AMP + diphosphate + H(+). The polypeptide is Histidine--tRNA ligase (Lactococcus lactis subsp. cremoris (strain MG1363)).